The sequence spans 86 residues: RNA-binding protein Hfq (86 aa).

The 60-residue stretch at 9-68 (DIFLNVLRRERIQVSIYLFNGIKLQGHIESFDQFVIVLKNTISQMVYKHAVSTIVPSKFV) folds into the Sm domain.

Belongs to the Hfq family. Homohexamer.

RNA chaperone that binds small regulatory RNA (sRNAs) and mRNAs to facilitate mRNA translational regulation in response to envelope stress, environmental stress and changes in metabolite concentrations. Also binds with high specificity to tRNAs. This is RNA-binding protein Hfq from Baumannia cicadellinicola subsp. Homalodisca coagulata.